We begin with the raw amino-acid sequence, 757 residues long: 5-methyltetrahydropteroyltriglutamate--homocysteine methyltransferase (757 aa).

Residues 17–20 and Lys-117 each bind 5-methyltetrahydropteroyltri-L-glutamate; that span reads RELK. L-homocysteine contacts are provided by residues 434–436 and Glu-487; that span reads IGS. Residues 434 to 436 and Glu-487 contribute to the L-methionine site; that span reads IGS. Residues 518–519 and Trp-564 contribute to the 5-methyltetrahydropteroyltri-L-glutamate site; that span reads RC. Residue Asp-602 coordinates L-homocysteine. Residue Asp-602 coordinates L-methionine. Glu-608 contacts 5-methyltetrahydropteroyltri-L-glutamate. Residues His-644, Cys-646, and Glu-668 each contribute to the Zn(2+) site. The Proton donor role is filled by His-697. Cys-729 lines the Zn(2+) pocket.

Belongs to the vitamin-B12 independent methionine synthase family. Zn(2+) is required as a cofactor.

The enzyme catalyses 5-methyltetrahydropteroyltri-L-glutamate + L-homocysteine = tetrahydropteroyltri-L-glutamate + L-methionine. The protein operates within amino-acid biosynthesis; L-methionine biosynthesis via de novo pathway; L-methionine from L-homocysteine (MetE route): step 1/1. In terms of biological role, catalyzes the transfer of a methyl group from 5-methyltetrahydrofolate to homocysteine resulting in methionine formation. The sequence is that of 5-methyltetrahydropteroyltriglutamate--homocysteine methyltransferase from Proteus mirabilis (strain HI4320).